We begin with the raw amino-acid sequence, 187 residues long: Adenine phosphoribosyltransferase (187 aa).

It belongs to the purine/pyrimidine phosphoribosyltransferase family. Homodimer.

It is found in the cytoplasm. It catalyses the reaction AMP + diphosphate = 5-phospho-alpha-D-ribose 1-diphosphate + adenine. Its pathway is purine metabolism; AMP biosynthesis via salvage pathway; AMP from adenine: step 1/1. Catalyzes a salvage reaction resulting in the formation of AMP, that is energically less costly than de novo synthesis. The sequence is that of Adenine phosphoribosyltransferase from Burkholderia pseudomallei (strain 668).